Here is a 27-residue protein sequence, read N- to C-terminus: DELTA-pseudomyrmecitoxin-Pp1a subunit A (27 aa).

Heterodimer composed of subunit A and subunit B (DELTA-PSDTX-Pp1a); disulfide-linked. In terms of tissue distribution, expressed by the venom gland.

Its subcellular location is the secreted. In terms of biological role, this heterodimer has insecticidal and cytotoxic properties. Induces immediate paralysis when injected into blowflies (Lucilia cuprina), and then death within 24 hours. Also inhibits the growth of Aedes albopictus mosquito C6/36 cells. The chain is DELTA-pseudomyrmecitoxin-Pp1a subunit A from Pseudomyrmex penetrator (Ant).